Here is a 736-residue protein sequence, read N- to C-terminus: Segment polarity protein dishevelled homolog DVL-2 (736 aa).

Positions 11–93 (VGETKVIYHL…RVVSWLVSSD (83 aa)) constitute a DIX domain. The interval 93 to 255 (DTPQPEVAPP…RMERTSSFSS (163 aa)) is disordered. Over residues 111–122 (VPPPPPLPPLPP) the composition is skewed to pro residues. Basic and acidic residues predominate over residues 159 to 171 (LRRDRPRRRDSSE). The segment covering 193 to 208 (ESSSTLMTSELESTSL) has biased composition (low complexity). The residue at position 211 (Ser-211) is a Phosphoserine. Residues 218–230 (SRFSSSTEQSSAS) show a composition bias toward polar residues. The span at 232 to 244 (LLKRHRRRRKQRP) shows a compositional bias: basic residues. Residues 267 to 339 (TVTLNMEKYN…NDDAVRVLRD (73 aa)) enclose the PDZ domain. The DEP domain occupies 433–507 (PESGLEVRDR…SEQCYYVFGD (75 aa)). The span at 558–568 (PHPYSPQPPPY) shows a compositional bias: pro residues. A disordered region spans residues 558 to 665 (PHPYSPQPPP…PNLRALPGLH (108 aa)). Low complexity-rich tracts occupy residues 581 to 598 (ASSQ…TRSD) and 614 to 629 (SKSG…SRGG).

The protein belongs to the DSH family. As to quaternary structure, interacts through its PDZ domain with the C-terminal regions of VANGL1 and VANGL2. Interacts with Rac. Interacts with ARRB1; the interaction is enhanced by phosphorylation of DVL1. Can form large oligomers (via DIX domain). Interacts (via DIX domain) with DIXDC1 (via DIX domain). Interacts (via DEP domain) with AP2M1 and the AP-2 complex. Interacts with FAM105B/otulin. Interacts with DCDC2. Interacts (when phosphorylated) with FOXK1 and FOXK2; the interaction induces DVL2 nuclear translocation. Interacts with MAPK15. Interacts with PKD1 (via extracellular domain). Interacts with LMBR1L. Post-translationally, phosphorylated by CSNK1D. WNT3A induces DVL2 phosphorylation by CSNK1E and MARK kinases. Ubiquitinated via 'Lys-63'-linked polyubiquitin chains; leading to its autophagy-mediated degradation. As to expression, ubiquitous.

The protein resides in the cell membrane. The protein localises to the cytoplasm. Its subcellular location is the cytosol. It localises to the cytoplasmic vesicle. It is found in the nucleus. Plays a role in the signal transduction pathways mediated by multiple Wnt genes. Participates both in canonical and non-canonical Wnt signaling by binding to the cytoplasmic C-terminus of frizzled family members and transducing the Wnt signal to down-stream effectors. Promotes internalization and degradation of frizzled proteins upon Wnt signaling. This is Segment polarity protein dishevelled homolog DVL-2 (Dvl2) from Mus musculus (Mouse).